The primary structure comprises 755 residues: Large structural phosphoprotein (755 aa).

Disordered stretches follow at residues 312-333 (ESSS…IKTE) and 522-555 (QSFD…STKT). Residues 535-555 (PQDQKSIKQKNGNKANSSTKT) show a composition bias toward polar residues.

Belongs to the herpesviridae large structural phosphoprotein family. Phosphorylated at multiple sites.

Its subcellular location is the virion tegument. This chain is Large structural phosphoprotein (U11), found in Homo sapiens (Human).